The primary structure comprises 859 residues: DNA mismatch repair protein MutS (859 aa).

618 to 625 (GPNMGGKS) is an ATP binding site. The disordered stretch occupies residues 803–829 (RDHDVQQNTEQQGTQQNMSFVPSAPSP). Low complexity predominate over residues 808–819 (QQNTEQQGTQQN).

Belongs to the DNA mismatch repair MutS family.

Functionally, this protein is involved in the repair of mismatches in DNA. It is possible that it carries out the mismatch recognition step. This protein has a weak ATPase activity. This is DNA mismatch repair protein MutS from Shewanella pealeana (strain ATCC 700345 / ANG-SQ1).